A 233-amino-acid chain; its full sequence is U2 small nuclear ribonucleoprotein A' (233 aa).

LRR repeat units follow at residues 20 to 40, 42 to 63, 65 to 86, and 89 to 110; these read KLTL…AITQ, KYQV…PKRF, NLQC…SFPS, and HITS…FKDK. Residues 122–160 form the LRRCT domain; that stretch reads NPITEMENYRYFIIWLIPSLKVLDFKKVKQAERKTSEDM.

This sequence belongs to the U2 small nuclear ribonucleoprotein A family. As to quaternary structure, associated with the spliceosome.

The protein localises to the nucleus. Functionally, involved in pre-mRNA splicing. The protein is U2 small nuclear ribonucleoprotein A' (LEA1) of Candida albicans (strain SC5314 / ATCC MYA-2876) (Yeast).